A 197-amino-acid polypeptide reads, in one-letter code: MKIIVLASTSPYRMQLMRQLGLPFHVAAPQYQEQIDQEIAPELLVKHQAAGKAKSLAQKYPDALIIGSDQVFVDASGRVLGKPDSLEGAVRQLRGMAGKSHTFYTGLSVYDSNRDETLTGFATYRVTLRALTEQEIRCYLQRENPLDCAGSFKVEGLGIALMQRLEGDDYTTLIGLPLIKLVDFLGHFGVRVLGDQA.

The active-site Proton acceptor is the Asp69.

The protein belongs to the Maf family. YceF subfamily. A divalent metal cation serves as cofactor.

The protein resides in the cytoplasm. The enzyme catalyses N(7)-methyl-GTP + H2O = N(7)-methyl-GMP + diphosphate + H(+). Nucleoside triphosphate pyrophosphatase that hydrolyzes 7-methyl-GTP (m(7)GTP). May have a dual role in cell division arrest and in preventing the incorporation of modified nucleotides into cellular nucleic acids. In Syntrophotalea carbinolica (strain DSM 2380 / NBRC 103641 / GraBd1) (Pelobacter carbinolicus), this protein is 7-methyl-GTP pyrophosphatase.